Consider the following 428-residue polypeptide: Gamma-glutamyl phosphate reductase (428 aa).

Belongs to the gamma-glutamyl phosphate reductase family.

It is found in the cytoplasm. It catalyses the reaction L-glutamate 5-semialdehyde + phosphate + NADP(+) = L-glutamyl 5-phosphate + NADPH + H(+). Its pathway is amino-acid biosynthesis; L-proline biosynthesis; L-glutamate 5-semialdehyde from L-glutamate: step 2/2. Catalyzes the NADPH-dependent reduction of L-glutamate 5-phosphate into L-glutamate 5-semialdehyde and phosphate. The product spontaneously undergoes cyclization to form 1-pyrroline-5-carboxylate. This is Gamma-glutamyl phosphate reductase from Mesorhizobium japonicum (strain LMG 29417 / CECT 9101 / MAFF 303099) (Mesorhizobium loti (strain MAFF 303099)).